The primary structure comprises 428 residues: MSAIVDIFAREILDSRGNPTVECDVLLESGVMGRAAVPSGASTGQKEALELRDGDKSRYSGKGVLKAVEHVNNQIAQALIGIDANEQSYIDQIMIELDGTENKGNLGANATLAVSMAVARAAAEDSGLPLYRYLGGAGPMSLPVPMMNVINGGEHANNSLNIQEFMIMPVGAKSFREALRCGAEIFHALKKLCDSKGFPTTVGDEGGFAPNLNSHKEALQLMVEATEAAGYKAGEDVLFALDCASSEFYKDGKYHLEAEGRSYTNAEFAEYLEGLVNEFPIISIEDGMDENDWEGWKLLTEKLGGRVQLVGDDLFVTNPKILAEGIEKGVANALLVKVNQIGTLSETLKAVDLAKRNRYASVMSHRSGETEDSTIADLAVATNCMQIKTGSLSRSDRMAKYNQLLRIEEELAEAADYPSKAAFYQLGK.

Q163 serves as a coordination point for (2R)-2-phosphoglycerate. Residue E205 is the Proton donor of the active site. The Mg(2+) site is built by D242, E285, and D312. (2R)-2-phosphoglycerate contacts are provided by K337, R366, S367, and K388. Catalysis depends on K337, which acts as the Proton acceptor.

The protein belongs to the enolase family. Mg(2+) serves as cofactor.

The protein resides in the cytoplasm. Its subcellular location is the secreted. The protein localises to the cell surface. It catalyses the reaction (2R)-2-phosphoglycerate = phosphoenolpyruvate + H2O. It functions in the pathway carbohydrate degradation; glycolysis; pyruvate from D-glyceraldehyde 3-phosphate: step 4/5. Catalyzes the reversible conversion of 2-phosphoglycerate (2-PG) into phosphoenolpyruvate (PEP). It is essential for the degradation of carbohydrates via glycolysis. The protein is Enolase of Neisseria meningitidis serogroup B (strain ATCC BAA-335 / MC58).